Reading from the N-terminus, the 151-residue chain is C-C motif chemokine 25 (151 aa).

A signal peptide spans 1-22; sequence MNLWLLVCLVASLMGAWSTVHT. Cystine bridges form between cysteine 29-cysteine 57 and cysteine 30-cysteine 73. Positions 94 to 151 are disordered; it reads THSKQHLGSRRNLQDSHLGGQRSNTGMSRLAHSKSKSSRSTRSNKKKTSFLNMANPGP. The span at 124-141 shows a compositional bias: basic residues; that stretch reads AHSKSKSSRSTRSNKKKT.

Belongs to the intercrine beta (chemokine CC) family.

Its subcellular location is the secreted. Functionally, potentially involved in T-cell development. Recombinant protein shows chemotactic activity on thymocytes, macrophages, THP-1 cells, and dendritics cells but is inactive on peripheral blood lymphocytes and neutrophils. Binds to CCR9. Binds to atypical chemokine receptor ACKR4 and mediates the recruitment of beta-arrestin (ARRB1/2) to ACKR4. This is C-C motif chemokine 25 (CCL25) from Canis lupus familiaris (Dog).